The following is a 354-amino-acid chain: Zinc finger protein 346 (354 aa).

4 consecutive Matrin-type zinc fingers follow at residues 34–64, 95–125, 165–195, and 232–262; these read TQCK…KVRR, KCCP…NLRL, KFCK…QETK, and FSCD…QLMS. Cysteine 36, cysteine 39, histidine 52, histidine 58, cysteine 97, cysteine 100, histidine 113, and histidine 119 together coordinate Zn(2+). The disordered stretch occupies residues 263-343; sequence MTPLSKEGPP…QPYVREDMMG (81 aa). Composition is skewed to low complexity over residues 270 to 289 and 310 to 323; these read GPPA…TGGA and GPSS…MGGL. Over residues 324 to 333 the composition is skewed to pro residues; it reads MPPPYPPPHS.

It is found in the nucleus. The protein resides in the cytoplasm. Functionally, binds preferentially to dsRNA, but also to RNA-DNA hybrids. The chain is Zinc finger protein 346 from Xenopus tropicalis (Western clawed frog).